The chain runs to 70 residues: Exodeoxyribonuclease 7 small subunit (70 aa).

It belongs to the XseB family. In terms of assembly, heterooligomer composed of large and small subunits.

Its subcellular location is the cytoplasm. The catalysed reaction is Exonucleolytic cleavage in either 5'- to 3'- or 3'- to 5'-direction to yield nucleoside 5'-phosphates.. Bidirectionally degrades single-stranded DNA into large acid-insoluble oligonucleotides, which are then degraded further into small acid-soluble oligonucleotides. The protein is Exodeoxyribonuclease 7 small subunit of Streptococcus sanguinis (strain SK36).